A 416-amino-acid chain; its full sequence is Serine hydroxymethyltransferase 1 (416 aa).

(6S)-5,6,7,8-tetrahydrofolate-binding positions include L121 and 125–127; that span reads GHL. At K229 the chain carries N6-(pyridoxal phosphate)lysine. Residues E245 and 354 to 356 each bind (6S)-5,6,7,8-tetrahydrofolate; that span reads SPF.

It belongs to the SHMT family. In terms of assembly, homodimer. Pyridoxal 5'-phosphate serves as cofactor.

The protein localises to the cytoplasm. The catalysed reaction is (6R)-5,10-methylene-5,6,7,8-tetrahydrofolate + glycine + H2O = (6S)-5,6,7,8-tetrahydrofolate + L-serine. It functions in the pathway one-carbon metabolism; tetrahydrofolate interconversion. It participates in amino-acid biosynthesis; glycine biosynthesis; glycine from L-serine: step 1/1. Catalyzes the reversible interconversion of serine and glycine with tetrahydrofolate (THF) serving as the one-carbon carrier. This reaction serves as the major source of one-carbon groups required for the biosynthesis of purines, thymidylate, methionine, and other important biomolecules. Also exhibits THF-independent aldolase activity toward beta-hydroxyamino acids, producing glycine and aldehydes, via a retro-aldol mechanism. This Vibrio parahaemolyticus serotype O3:K6 (strain RIMD 2210633) protein is Serine hydroxymethyltransferase 1.